Here is a 164-residue protein sequence, read N- to C-terminus: HTH-type transcriptional regulator IscR (164 aa).

Residues 2-131 (RLTSKGRYAV…NNITLAELVN (130 aa)) enclose the HTH rrf2-type domain. Positions 28 to 51 (LADISERQGISLSYLEQLFSRLRK) form a DNA-binding region, H-T-H motif. Residues Cys-92, Cys-98, and Cys-104 each contribute to the [2Fe-2S] cluster site. Residues Cys-92, Cys-98, and Cys-104 each coordinate a metal cation. Residues 145-164 (DTRRTANGRPQETINVNLRA) are disordered. Polar residues predominate over residues 152–164 (GRPQETINVNLRA).

[2Fe-2S] cluster is required as a cofactor.

Regulates the transcription of several operons and genes involved in the biogenesis of Fe-S clusters and Fe-S-containing proteins. This Serratia proteamaculans (strain 568) protein is HTH-type transcriptional regulator IscR.